The chain runs to 444 residues: Ribosomal protein uS12 methylthiotransferase RimO (444 aa).

Positions 2–118 (LKIALESLGC…IDKILKELSE (117 aa)) constitute an MTTase N-terminal domain. Cysteine 11, cysteine 47, cysteine 81, cysteine 155, cysteine 159, and cysteine 162 together coordinate [4Fe-4S] cluster. Residues 141–371 (STPSYMAYLK…MMIQQKISEE (231 aa)) form the Radical SAM core domain. Positions 374–441 (DKKIGKTYEV…EYDLMGDVLY (68 aa)) constitute a TRAM domain.

The protein belongs to the methylthiotransferase family. RimO subfamily. [4Fe-4S] cluster serves as cofactor.

It is found in the cytoplasm. It catalyses the reaction L-aspartate(89)-[ribosomal protein uS12]-hydrogen + (sulfur carrier)-SH + AH2 + 2 S-adenosyl-L-methionine = 3-methylsulfanyl-L-aspartate(89)-[ribosomal protein uS12]-hydrogen + (sulfur carrier)-H + 5'-deoxyadenosine + L-methionine + A + S-adenosyl-L-homocysteine + 2 H(+). Functionally, catalyzes the methylthiolation of an aspartic acid residue of ribosomal protein uS12. This chain is Ribosomal protein uS12 methylthiotransferase RimO, found in Clostridioides difficile (strain 630) (Peptoclostridium difficile).